The primary structure comprises 545 residues: Germacrene D synthase 1 (545 aa).

D298, D302, N443, and E451 together coordinate Mg(2+). Residues 298 to 302 (DDTFD) carry the DDXXD motif motif.

Belongs to the terpene synthase family. The cofactor is Mg(2+).

Its subcellular location is the cytoplasm. It is found in the cytosol. The enzyme catalyses (2E,6E)-farnesyl diphosphate = (-)-germacrene D + diphosphate. The protein operates within secondary metabolite biosynthesis; terpenoid biosynthesis. Functionally, sesquiterpene synthase involved in germacrene D biosynthesis. Also produces at least 13 additional sesquiterpene products, including germacrene C and (+)-germacrene A, beta-ylangene, (E)-beta-farnesene and (E,E)-alpha-farnesene. The sequence is that of Germacrene D synthase 1 from Pogostemon cablin (Patchouli).